We begin with the raw amino-acid sequence, 1516 residues long: Myosin-52 (1516 aa).

The region spanning 7 to 62 (YKGLQCWIPDEQSQWIPGSIKDCRVEGEKAFLTVQDENENETVITVKPDDLNYEGR) is the Myosin N-terminal SH3-like domain. Residues 73–766 (SDADDLTDLS…VTPLLESARD (694 aa)) enclose the Myosin motor domain. Residue 167–174 (GESGAGKT) coordinates ATP. The tract at residues 647–669 (LVSLMSTINETNAHYIRCIKPNE) is actin-binding. IQ domains follow at residues 793-813 (RKRV…RHTE), 818-838 (SSNI…KEFI), 840-865 (TKNS…EKTK), 866-886 (HDAT…KHYK), and 888-917 (LQYY…ESTK). Residues 926–1034 (YRLESRLFEI…LKSQLKNYDM (109 aa)) are a coiled coil. Phosphoserine occurs at positions 1065 and 1072. The Dilute domain occupies 1163–1431 (ERYCVHTLEY…SELSKNIVAE (269 aa)).

The protein belongs to the TRAFAC class myosin-kinesin ATPase superfamily. Myosin family.

It localises to the cytoplasm. Involved in cell wall deposition where it has a role in the localization of mok1. The protein is Myosin-52 (myo52) of Schizosaccharomyces pombe (strain 972 / ATCC 24843) (Fission yeast).